Reading from the N-terminus, the 236-residue chain is Small ribosomal subunit protein uS3 (236 aa).

One can recognise a KH type-2 domain in the interval 39–107 (IRSYVMEELK…ETSLNIVEIR (69 aa)). Positions 214–236 (ASEHRATRNDNSSSSLNRRRESV) are disordered.

This sequence belongs to the universal ribosomal protein uS3 family. In terms of assembly, part of the 30S ribosomal subunit. Forms a tight complex with proteins S10 and S14.

Its function is as follows. Binds the lower part of the 30S subunit head. Binds mRNA in the 70S ribosome, positioning it for translation. The sequence is that of Small ribosomal subunit protein uS3 from Bartonella bacilliformis (strain ATCC 35685 / KC583 / Herrer 020/F12,63).